Consider the following 164-residue polypeptide: Glycine cleavage system H protein, mitochondrial (164 aa).

The N-terminal 39 residues, 1–39 (MAWLVLRRLGPVLAPRCPRLSLRPQVPAVRRLGTGSLLL), are a transit peptide targeting the mitochondrion. The 83-residue stretch at 57-139 (IGTVGISNFA…YQDGWLIKMT (83 aa)) folds into the Lipoyl-binding domain. K98 is modified (N6-lipoyllysine).

This sequence belongs to the GcvH family. As to quaternary structure, the glycine cleavage system is composed of four proteins: P (GLDC), T (GCST), L (DLD) and H (GCSH). Interacts with GLDC. (R)-lipoate serves as cofactor.

Its subcellular location is the mitochondrion. In terms of biological role, the glycine cleavage system catalyzes the degradation of glycine. The H protein (GCSH) shuttles the methylamine group of glycine from the P protein (GLDC) to the T protein (GCST). Has a pivotal role in the lipoylation of enzymes involved in cellular energetics such as the mitochondrial dihydrolipoyllysine-residue acetyltransferase component of pyruvate dehydrogenase complex (DLAT), and the mitochondrial dihydrolipoyllysine-residue succinyltransferase component of 2-oxoglutarate dehydrogenase complex (DLST). The chain is Glycine cleavage system H protein, mitochondrial from Gallus gallus (Chicken).